A 239-amino-acid polypeptide reads, in one-letter code: Ribonuclease 3 (239 aa).

The 123-residue stretch at 11–133 folds into the RNase III domain; that stretch reads HAAIQKKLGY…MFAAVSFDAD (123 aa). Glu46 is a binding site for Mg(2+). Asp50 is an active-site residue. 2 residues coordinate Mg(2+): Asp119 and Glu122. In terms of domain architecture, DRBM spans 160–230; the sequence is DGKTALQEAL…AKEALKWLEE (71 aa).

Belongs to the ribonuclease III family. Homodimer. Requires Mg(2+) as cofactor.

Its subcellular location is the cytoplasm. The catalysed reaction is Endonucleolytic cleavage to 5'-phosphomonoester.. Digests double-stranded RNA. Involved in the processing of primary rRNA transcript to yield the immediate precursors to the large and small rRNAs (23S and 16S). Also processes some mRNAs, and tRNAs when they are encoded in the rRNA operon. Its function is as follows. CRISPR (clustered regularly interspaced short palindromic repeat) is an adaptive immune system that provides protection against mobile genetic elements (viruses, transposable elements and conjugative plasmids). CRISPR clusters contain spacers, sequences complementary to antecedent mobile elements, and target invading nucleic acids. CRISPR clusters are transcribed and processed into CRISPR RNA (crRNA). In this organism endogenous ribonuclease 3 and Cas9 are required for correct coprocessing of pre-crRNA and the trans-encoded small RNA (tracrRNA). Cas9, crRNA and tracRNA are required for cleavage of invading DNA. Involved in 3'-end processing but not 5'-end processing of crRNA and tracrRNA. The polypeptide is Ribonuclease 3 (Neisseria meningitidis serogroup C (strain 8013)).